We begin with the raw amino-acid sequence, 111 residues long: Mitochondrial import inner membrane translocase subunit Tim10B (111 aa).

The Twin CX3C motif signature appears at 24 to 48 (CFNACARDYTTSTLTKDEGSCVSQC). Disulfide bonds link Cys-24/Cys-48 and Cys-28/Cys-44. Positions 73 to 111 (KQGEQSPTEAIKSAKPEPAVPAPEATPVETTPVIEENKQ) are disordered. The span at 94–105 (APEATPVETTPV) shows a compositional bias: low complexity.

The protein belongs to the small Tim family. Component of the TIM22 complex, whose core is composed of tim-22, associated with peripheral protein tin-9.2/tim-10b and the 70 kDa heterohexamer. In most cases, the 70 kDa complex is composed of TIMM9 and TIMM10.

Its subcellular location is the mitochondrion inner membrane. Functionally, component of the TIM22 complex, a complex that mediates the import and insertion of multi-pass transmembrane proteins into the mitochondrial inner membrane. The TIM22 complex forms a twin-pore translocase that uses the membrane potential as the external driving force. In the TIM22 complex, it may act as a docking point for the soluble 70 kDa complex that guides the target proteins in transit through the aqueous mitochondrial intermembrane space. The protein is Mitochondrial import inner membrane translocase subunit Tim10B (tin-9.2) of Caenorhabditis elegans.